The sequence spans 89 residues: Small ribosomal subunit protein uS15 (89 aa).

It belongs to the universal ribosomal protein uS15 family. As to quaternary structure, part of the 30S ribosomal subunit. Forms a bridge to the 50S subunit in the 70S ribosome, contacting the 23S rRNA.

One of the primary rRNA binding proteins, it binds directly to 16S rRNA where it helps nucleate assembly of the platform of the 30S subunit by binding and bridging several RNA helices of the 16S rRNA. Its function is as follows. Forms an intersubunit bridge (bridge B4) with the 23S rRNA of the 50S subunit in the ribosome. The chain is Small ribosomal subunit protein uS15 from Porphyromonas gingivalis (strain ATCC 33277 / DSM 20709 / CIP 103683 / JCM 12257 / NCTC 11834 / 2561).